Consider the following 446-residue polypeptide: sn-2 acyl-lipid omega-3 desaturase (ferredoxin), chloroplastic (446 aa).

Residues 1–65 constitute a chloroplast transit peptide; it reads MANLVLSECG…DGFTRNWALN (65 aa). 2 helical membrane-spanning segments follow: residues 118–138 and 141–161; these read LSYV…AAYL and WIVW…LFVL. Positions 163 to 167 match the Histidine box-1 motif; sequence HDCGH. Residues 199–203 carry the Histidine box-2 motif; sequence HRTHH. 3 helical membrane passes run 231 to 250, 279 to 299, and 302 to 322; these read RFFR…YLWA, TACW…IGPI, and LKLY…VTYL. Residues 366–370 carry the Histidine box-3 motif; the sequence is HVIHH.

It belongs to the fatty acid desaturase type 1 family. In terms of tissue distribution, most abundant in leaves and seedlings.

The protein localises to the plastid. The protein resides in the chloroplast inner membrane. It carries out the reaction a (7Z,10Z)-hexadecadienoyl-containing glycerolipid + 2 reduced [2Fe-2S]-[ferredoxin] + O2 + 2 H(+) = a (7Z,10Z,13Z)-hexadecatrienoyl-containing glycerolipid + 2 oxidized [2Fe-2S]-[ferredoxin] + 2 H2O. It catalyses the reaction a (9Z,12Z)-octadecadienoyl-containing glycerolipid + 2 reduced [2Fe-2S]-[ferredoxin] + O2 + 2 H(+) = (9Z,12Z,15Z)-octadecatrienoyl-containing glycerolipid + 2 oxidized [2Fe-2S]-[ferredoxin] + 2 H2O. The protein operates within lipid metabolism; polyunsaturated fatty acid biosynthesis. Its function is as follows. Chloroplast omega-3 fatty acid desaturase introduces the third double bond in the biosynthesis of 16:3 and 18:3 fatty acids, important constituents of plant membranes. It is thought to use ferredoxin as an electron donor and to act on fatty acids esterified to galactolipids, sulfolipids and phosphatidylglycerol. This chain is sn-2 acyl-lipid omega-3 desaturase (ferredoxin), chloroplastic, found in Arabidopsis thaliana (Mouse-ear cress).